Consider the following 1439-residue polypeptide: MEENSNKFEQELKEIGQDRNQFPHISVEESLQEFDSFSNKIENESKQFGAQKDPESYMAGGETEEDFKLRKYFENSERMHLENGGNEKKMGVSIRNLTVVGLGADASVIADMSTPFFSILNFFKPSFWTKKTSTFDILHDVTTFCKDGEMVLVLGRPGAGCSTLLRVIANQTASYVSVKGDVRYGGIPSKEFERYRAESIYTPEEDSHHPTLTVRETLDFALKCKTPGNRLPDETKRSFREKVFNLLLSMFGIVHQADTIVGNEYVRGLSGGERKRLTITEAMVSSASITCWDCSTRGLDAASAFDYAKSIRIMSDTLHKTTIASFYQASDSIYNVFDKVCVLEKGRCIYFGPVGMAKQYFMSLGFDCEPRKSTPDFLTGVTNPQERIIKKGFEGRTPETSADFEAAWKNSDIYRDQLQEQKEYEELIERTQPKVAFVQEVKDENSKTNFKKSQYTTSFITQVVALTKRNFQLILNDKFGLFTKYLSVLIQAFVYSSVFYNMASDINGLFTRGGAILSAVIFNAFLSVGEMSMTFIGRRVLQKHKSYALYRPSALHIAQVVNDIPFTLLQVFLFSIIAYFMFGLEYDGGKFFIFSFTLVGASLACTALFRCFGYLCPSMYIAQNISNVFIIFMLTYSGYTVPIPKMHPWFSWFRHINIFTYAFKAIMANEFEGKEFNCLESAIPYGPAYQGSEFDAYRICPLGGIEQGSLYFKGEFYMDKTLRFKEGEMSQNVIIVYCWWIFFVICNMLAMEYIDHTSGGYTHKVYKKGKAPKMNDVEEEKQQNAIVANATNNMKDTLHMDGGIFTWQNIRYTVKVPGGERLLLNNIEGWIKPGQMTALMGSSGAGKTTLLDVLAKRKTLGVVEGDSHLNGRELEIDFERITGYVEQMDVHNPGLTVREALRFSAKLRQEPEVSLEEKFKYVEHVLEMMEMKHLGDALIGTLETGVGISVEERKRLTIGVELVAKPQILFLDEPTSGLDAQSSYNIIKFIRKLADAGMPLVCTIHQPSSVLFEHFDRILLLAKGGKTVYFGDIGEKSKTLTSYFERHGVRPCTESENPAEYILEATGAGVHGKSDVNWPETWKQSPELADISRELAALKEQGAQQYKIRSDGPAREFSQSTWYQTKEVYKRLNLIWWRDPYYTYGSFVQSALCGLIIGFTFWNLQGSSSDMNQRIFFIFEALMLGILLIFVVMPQLISQREYFKRDFASKFYSWFPFAISIVVVELPFIVISGTIFFFCSFWTAGLDKTSDSEQTFYFWFIFVIFLFFCVSFGQAVAAVCINMFFAMTLIPLLIVFLFLFSGVMTPPSSIPTFWRGWVYHLNPCRYFMEGIVTNILKTVDVKCSYEDMITFTFPKSYNTCQNYTSAFQSYGPSGYVESSILNGEPACSYCIYKNGEQYYKTLGWSDDNRWRNVGIIICFFVFNILMVILFVYLTRKGSR.

Residues 1-17 are compositionally biased toward basic and acidic residues; it reads MEENSNKFEQELKEIGQ. Positions 1–21 are disordered; sequence MEENSNKFEQELKEIGQDRNQ. Residues 117 to 370 form the ABC transporter 1 domain; the sequence is FSILNFFKPS…FMSLGFDCEP (254 aa). Residues 475–700 enclose the ABC transmembrane type-2 1 domain; sequence LNDKFGLFTK…GSEFDAYRIC (226 aa). 6 helical membrane passes run 479–499, 516–536, 564–584, 589–609, 614–634, and 734–754; these read FGLFTKYLSVLIQAFVYSSVF, ILSAVIFNAFLSVGEMSMTFI, IPFTLLQVFLFSIIAYFMFGL, GKFFIFSFTLVGASLACTALF, YLCPSMYIAQNISNVFIIFML, and IIVYCWWIFFVICNMLAMEYI. Residues 805–1049 form the ABC transporter 2 domain; the sequence is FTWQNIRYTV…LTSYFERHGV (245 aa). 841 to 848 provides a ligand contact to ATP; the sequence is GSSGAGKT. One can recognise an ABC transmembrane type-2 2 domain in the interval 1141-1366; it reads YYTYGSFVQS…YNTCQNYTSA (226 aa). 6 consecutive transmembrane segments (helical) span residues 1144–1164, 1175–1195, 1217–1237, 1256–1276, 1283–1303, and 1413–1433; these read YGSFVQSALCGLIIGFTFWNL, IFFIFEALMLGILLIFVVMPQ, FAISIVVVELPFIVISGTIFF, FYFWFIFVIFLFFCVSFGQAV, MFFAMTLIPLLIVFLFLFSGV, and VGIIICFFVFNILMVILFVYL.

Belongs to the ABC transporter superfamily. ABCG family. PDR (TC 3.A.1.205) subfamily.

Its subcellular location is the membrane. The chain is ABC transporter G family member 14 (abcG14) from Dictyostelium discoideum (Social amoeba).